Reading from the N-terminus, the 136-residue chain is Small ribosomal subunit protein bS6 (136 aa).

The span at 117-130 (EERSRSSRRQREDV) shows a compositional bias: basic and acidic residues. Positions 117–136 (EERSRSSRRQREDVIEGVEL) are disordered.

The protein belongs to the bacterial ribosomal protein bS6 family.

Functionally, binds together with bS18 to 16S ribosomal RNA. The chain is Small ribosomal subunit protein bS6 from Bartonella quintana (strain Toulouse) (Rochalimaea quintana).